The following is a 440-amino-acid chain: Heat stress transcription factor A-4b (440 aa).

The stretch at asparagine 121–glutamate 181 forms a coiled coil. The segment at leucine 133–valine 183 is hydrophobic repeat HR-A/B. The Nuclear export signal signature appears at methionine 158–glutamate 163. The short motif at arginine 200–arginine 204 is the Nuclear localization signal element. The interval aspartate 264 to leucine 417 is disordered. Residues serine 295 to alanine 305 are compositionally biased toward polar residues. Residues serine 333 to glutamate 343 are compositionally biased toward basic and acidic residues. The AHA motif lies at aspartate 375–glutamate 384. Positions glutamine 380–aspartate 390 are enriched in polar residues. Over residues alanine 391 to leucine 417 the composition is skewed to basic and acidic residues.

Belongs to the HSF family. Class A subfamily. Homotrimer. In terms of processing, exhibits temperature-dependent phosphorylation.

The protein localises to the cytoplasm. The protein resides in the nucleus. Transcriptional regulator that specifically binds DNA of heat shock promoter elements (HSE). This is Heat stress transcription factor A-4b (HSFA4B) from Oryza sativa subsp. japonica (Rice).